Here is a 142-residue protein sequence, read N- to C-terminus: Large ribosomal subunit protein uL24 (142 aa).

A compositionally biased stretch (polar residues) spans 1 to 11; sequence MKVNPFVSSDS. The disordered stretch occupies residues 1–24; it reads MKVNPFVSSDSGKSRKAHFNAPSH.

This sequence belongs to the universal ribosomal protein uL24 family.

The protein is Large ribosomal subunit protein uL24 (rpl-26) of Caenorhabditis elegans.